Reading from the N-terminus, the 518-residue chain is Vesicular inhibitory amino acid transporter (518 aa).

Over 1–125 (MATLIRSKLS…WNVTNAIQGM (125 aa)) the chain is Cytoplasmic. The helical transmembrane segment at 126-146 (FVLGLPYAILHGGYLGLFLII) threads the bilayer. The Lumenal, vesicle portion of the chain corresponds to 147–197 (FAAVVCCYTGKILIACLYEENEDGETVRVRDSYVDIANACCAPRFPKLGGR). The helical transmembrane segment at 198–218 (VVNVAQIIELVMTCILYVVVS) threads the bilayer. Residues 219-258 (GNLMYNSFPNLPISQKSWSIMATAVLLPCAFLKNLKAVSK) are Cytoplasmic-facing. Residues 259 to 279 (FSLLCTVAHFVINILVIAYCL) traverse the membrane as a helical segment. Residues 280–298 (SRARDWAWDKVKFYIDVKK) are Lumenal, vesicle-facing. Residues 299–319 (FPISIGIIVFSYTSQIFLPSL) traverse the membrane as a helical segment. The Cytoplasmic segment spans residues 320–334 (EGNMQSPREFHCMMN). A helical transmembrane segment spans residues 335-355 (WTHIAACILKGLFALVAYLTW). The Lumenal, vesicle segment spans residues 356 to 376 (ADETKEVITDNLPSTIRAVVN). The chain crosses the membrane as a helical span at residues 377–397 (LFLVSKALLSYPLPFFAAVEV). The Cytoplasmic portion of the chain corresponds to 398–431 (LEKSLFQEGARAFFPNCYGGDGRLKSWGLTLRCA). The helical transmembrane segment at 432-452 (LVVFTLLMAIYVPHFALLMGL) threads the bilayer. The Lumenal, vesicle portion of the chain corresponds to 453 to 454 (TG). The chain crosses the membrane as a helical span at residues 455-475 (SLTGAGLCFLLPSLFHLKLMW). Residues 476-482 (RQLLWHQ) are Cytoplasmic-facing. The helical transmembrane segment at 483–503 (VFFDVSIFVIGSICSVSGFVH) threads the bilayer. The Lumenal, vesicle portion of the chain corresponds to 504-518 (SLEGLIEAYAYNIED).

This sequence belongs to the amino acid/polyamine transporter 2 family. Initially expressed in late neurula stages in the anterior spinal cord. By early tailbud stages, expression extends posteriorly along the entire developing spinal cord and appears in the hindbrain. In late tailbud embryos, expressed in the forebrain, midbrain, hindbrain, spinal cord and retina. In swimming tadpoles, expressed in an extended and more intense pattern including interneurons.

The protein localises to the cytoplasmic vesicle membrane. It is found in the presynapse. The enzyme catalyses 4-aminobutanoate(out) + n H(+)(in) = 4-aminobutanoate(in) + n H(+)(out). It catalyses the reaction glycine(out) + n H(+)(in) = glycine(in) + n H(+)(out). It carries out the reaction beta-alanine(out) + n H(+)(in) = beta-alanine(in) + n H(+)(out). Antiporter that exchanges vesicular protons for cytosolic 4-aminobutanoate or to a lesser extend glycine, thus allowing their secretion from nerve terminals. The transport is equally dependent on the chemical and electrical components of the proton gradient. May also transport beta-alanine. Acidification of GABAergic synaptic vesicles is a prerequisite for 4-aminobutanoate uptake. The polypeptide is Vesicular inhibitory amino acid transporter (Xenopus laevis (African clawed frog)).